The chain runs to 504 residues: Histidine--tRNA ligase (504 aa).

Belongs to the class-II aminoacyl-tRNA synthetase family. As to quaternary structure, homodimer.

It localises to the cytoplasm. The enzyme catalyses tRNA(His) + L-histidine + ATP = L-histidyl-tRNA(His) + AMP + diphosphate + H(+). This Rhizobium rhizogenes (strain K84 / ATCC BAA-868) (Agrobacterium radiobacter) protein is Histidine--tRNA ligase.